Consider the following 32-residue polypeptide: Photosystem II reaction center protein T (32 aa).

Residues 3–23 form a helical membrane-spanning segment; the sequence is ALVYTFLLIGTLVVIFFAIFF.

It belongs to the PsbT family. As to quaternary structure, PSII is composed of 1 copy each of membrane proteins PsbA, PsbB, PsbC, PsbD, PsbE, PsbF, PsbH, PsbI, PsbJ, PsbK, PsbL, PsbM, PsbT, PsbX, PsbY, PsbZ, Psb30/Ycf12, at least 3 peripheral proteins of the oxygen-evolving complex and a large number of cofactors. It forms dimeric complexes.

It is found in the plastid. Its subcellular location is the chloroplast thylakoid membrane. Functionally, found at the monomer-monomer interface of the photosystem II (PS II) dimer, plays a role in assembly and dimerization of PSII. PSII is a light-driven water plastoquinone oxidoreductase, using light energy to abstract electrons from H(2)O, generating a proton gradient subsequently used for ATP formation. The chain is Photosystem II reaction center protein T from Emiliania huxleyi (Coccolithophore).